Reading from the N-terminus, the 576-residue chain is Formate--tetrahydrofolate ligase (576 aa).

An ATP-binding site is contributed by 64 to 71; that stretch reads TPLGEGKT.

The protein belongs to the formate--tetrahydrofolate ligase family.

It carries out the reaction (6S)-5,6,7,8-tetrahydrofolate + formate + ATP = (6R)-10-formyltetrahydrofolate + ADP + phosphate. It participates in one-carbon metabolism; tetrahydrofolate interconversion. This Aeromonas hydrophila subsp. hydrophila (strain ATCC 7966 / DSM 30187 / BCRC 13018 / CCUG 14551 / JCM 1027 / KCTC 2358 / NCIMB 9240 / NCTC 8049) protein is Formate--tetrahydrofolate ligase.